We begin with the raw amino-acid sequence, 114 residues long: Secretoglobin family 2B member 2 (114 aa).

An N-terminal signal peptide occupies residues 1–23 (MKGTLLLLALLVTGELGFQRTEA).

It belongs to the secretoglobin family. Expressed in lacrimal gland.

The protein localises to the secreted. In Mus musculus (Mouse), this protein is Secretoglobin family 2B member 2 (Scgb2b2).